The chain runs to 288 residues: Oxaloacetate decarboxylase (288 aa).

Position 47 (S47) interacts with substrate. Residue D85 participates in Mg(2+) binding. Substrate-binding residues include R156 and H232.

This sequence belongs to the isocitrate lyase/PEP mutase superfamily. Oxaloacetate decarboxylase family. In terms of assembly, homotetramer; dimer of dimers. Requires Mg(2+) as cofactor.

The catalysed reaction is oxaloacetate + H(+) = pyruvate + CO2. Catalyzes the decarboxylation of oxaloacetate into pyruvate. Seems to play a role in maintaining cellular concentrations of bicarbonate and pyruvate. The protein is Oxaloacetate decarboxylase of Rhodopseudomonas palustris (strain ATCC BAA-98 / CGA009).